Consider the following 114-residue polypeptide: Ig heavy chain V region (114 aa).

In terms of domain architecture, Ig-like spans 1–106 (EVQLQQSGAE…AVRVISRYFD (106 aa)).

This Mus musculus (Mouse) protein is Ig heavy chain V region.